An 88-amino-acid polypeptide reads, in one-letter code: DNA-directed RNA polymerase subunit omega (88 aa).

Belongs to the RNA polymerase subunit omega family. In terms of assembly, the RNAP catalytic core consists of 2 alpha, 1 beta, 1 beta' and 1 omega subunit. When a sigma factor is associated with the core the holoenzyme is formed, which can initiate transcription.

It catalyses the reaction RNA(n) + a ribonucleoside 5'-triphosphate = RNA(n+1) + diphosphate. Functionally, promotes RNA polymerase assembly. Latches the N- and C-terminal regions of the beta' subunit thereby facilitating its interaction with the beta and alpha subunits. This chain is DNA-directed RNA polymerase subunit omega, found in Anaeromyxobacter dehalogenans (strain 2CP-1 / ATCC BAA-258).